We begin with the raw amino-acid sequence, 282 residues long: Putative hydrolase Bamb_4846 (282 aa).

Residues Glu124, Glu126, and Asp155 each contribute to the Mg(2+) site.

It belongs to the FAH family. Requires Mg(2+) as cofactor.

This chain is Putative hydrolase Bamb_4846, found in Burkholderia ambifaria (strain ATCC BAA-244 / DSM 16087 / CCUG 44356 / LMG 19182 / AMMD) (Burkholderia cepacia (strain AMMD)).